A 431-amino-acid polypeptide reads, in one-letter code: Saglin (431 aa).

Positions 1-39 are cleaved as a signal peptide; that stretch reads MSVRGYSGVQVISSRKHRSMSRLPTVLLLLASAAVLAAG. N-linked (GlcNAc...) asparagine glycosylation occurs at N95. A coiled-coil region spans residues 120 to 169; it reads LDDAQRQMEQEHRQYAATLEEQLHAAQQETQQEQEMKKALQKQLDALTDS.

Homodimer; disulfide-linked. In terms of assembly, (Microbial infection) Interacts with Plasmodium berghei TRAP (via integrin-like A-domain); the interaction probably promotes sporozoite invasion of salivary gland. As to expression, female saliva (at protein level). Female salivary gland (at protein level).

The protein localises to the secreted. Its function is as follows. (Microbial infection) Facilitates invasion of mosquito salivary glands by Plasmodium yoelii sporozoites. In terms of biological role, (Microbial infection) Facilitates invasion of mosquito salivary glands by Plasmodium falciparum sporozoites. (Microbial infection) Probably facilitates invasion of mosquito salivary glands by Plasmodium berghei sporozoites. This Anopheles gambiae (African malaria mosquito) protein is Saglin.